The primary structure comprises 631 residues: tRNA uridine 5-carboxymethylaminomethyl modification enzyme MnmG (631 aa).

13–18 contributes to the FAD binding site; sequence GGGHAG. 273–287 contributes to the NAD(+) binding site; that stretch reads GPRYCPSIEDKVNRF.

The protein belongs to the MnmG family. As to quaternary structure, homodimer. Heterotetramer of two MnmE and two MnmG subunits. It depends on FAD as a cofactor.

It is found in the cytoplasm. Functionally, NAD-binding protein involved in the addition of a carboxymethylaminomethyl (cmnm) group at the wobble position (U34) of certain tRNAs, forming tRNA-cmnm(5)s(2)U34. The chain is tRNA uridine 5-carboxymethylaminomethyl modification enzyme MnmG from Chromohalobacter salexigens (strain ATCC BAA-138 / DSM 3043 / CIP 106854 / NCIMB 13768 / 1H11).